The chain runs to 167 residues: E1B protein, small T-antigen (167 aa).

The disordered stretch occupies residues 143–167 (GLDPVQEEEEEEENLRAGLDPSTEL).

It belongs to the adenoviridae E1B 19 kDa protein family.

Its subcellular location is the host cell membrane. It is found in the host nucleus envelope. It localises to the host nucleus lamina. Functionally, putative adenovirus Bcl-2 homolog that inhibits apoptosis induced by TNF or FAS pathways, as well as p53-mediated apoptosis. Without E1B 19K function, virus production is compromised because of premature death of host cell. Interacts with Bax protein in cell lysates. The chain is E1B protein, small T-antigen from Human adenovirus F serotype 40 (HAdV-40).